Reading from the N-terminus, the 147-residue chain is Ponticulin-like protein C5 (147 aa).

A signal peptide spans 1–20; that stretch reads MKLNNSLLLLIVAIIASSNA. Asn118 is lipidated: GPI-like-anchor amidated asparagine. N-linked (GlcNAc...) asparagine glycosylation is present at Asn118. Residues 119–147 constitute a propeptide, removed in mature form; it reads SSESDSSDSTRIGASFALFALALLSMLAL.

The protein belongs to the ponticulin family. In terms of processing, the GPI-like-anchor contains a phosphoceramide group, rather than a phosphatidyl group.

Its subcellular location is the cell membrane. The polypeptide is Ponticulin-like protein C5 (ponC5) (Dictyostelium discoideum (Social amoeba)).